The following is a 576-amino-acid chain: DNA mismatch repair protein MutL (576 aa).

Belongs to the DNA mismatch repair MutL/HexB family.

Its function is as follows. This protein is involved in the repair of mismatches in DNA. It is required for dam-dependent methyl-directed DNA mismatch repair. May act as a 'molecular matchmaker', a protein that promotes the formation of a stable complex between two or more DNA-binding proteins in an ATP-dependent manner without itself being part of a final effector complex. This is DNA mismatch repair protein MutL from Chlamydia trachomatis serovar L2 (strain ATCC VR-902B / DSM 19102 / 434/Bu).